The chain runs to 442 residues: Serine--tRNA ligase (442 aa).

L-serine is bound at residue 244-246 (TAE). 275–277 (RAE) is a binding site for ATP. Glu298 provides a ligand contact to L-serine. 365-368 (EISS) contacts ATP. Residue Ser400 coordinates L-serine.

It belongs to the class-II aminoacyl-tRNA synthetase family. Type-1 seryl-tRNA synthetase subfamily. Homodimer. The tRNA molecule binds across the dimer.

It is found in the cytoplasm. It carries out the reaction tRNA(Ser) + L-serine + ATP = L-seryl-tRNA(Ser) + AMP + diphosphate + H(+). The enzyme catalyses tRNA(Sec) + L-serine + ATP = L-seryl-tRNA(Sec) + AMP + diphosphate + H(+). It participates in aminoacyl-tRNA biosynthesis; selenocysteinyl-tRNA(Sec) biosynthesis; L-seryl-tRNA(Sec) from L-serine and tRNA(Sec): step 1/1. Catalyzes the attachment of serine to tRNA(Ser). Is also able to aminoacylate tRNA(Sec) with serine, to form the misacylated tRNA L-seryl-tRNA(Sec), which will be further converted into selenocysteinyl-tRNA(Sec). This chain is Serine--tRNA ligase, found in Bradyrhizobium sp. (strain ORS 278).